The following is a 282-amino-acid chain: Kallikrein-11 (282 aa).

An N-terminal signal peptide occupies residues 1 to 50 (MQRLRWLRDWKSSGRGLTAAKEPGARSSPLQAMRILQLILLALATGLVGG). The propeptide at 51–53 (ETR) is activation peptide. Residues 53-280 (RIIKGFECKP…YVDWIQETMK (228 aa)) enclose the Peptidase S1 domain. 6 disulfides stabilise this stretch: Cys60–Cys195, Cys79–Cys95, Cys167–Cys269, Cys174–Cys241, Cys206–Cys220, and Cys231–Cys256. Residue His94 is the Charge relay system of the active site. Asn131 is a glycosylation site (N-linked (GlcNAc...) asparagine). The active-site Charge relay system is Asp142. Asn197 and Asn213 each carry an N-linked (GlcNAc...) asparagine glycan. Residue Ser235 is the Charge relay system of the active site. Asn242 carries an N-linked (GlcNAc...) asparagine glycan.

This sequence belongs to the peptidase S1 family. Kallikrein subfamily. About 40% of KLK11 is inactivated by internal cleavage after Arg-188. This proteolytic inactivation may be effected by plasminogen. As to expression, expressed in brain, skin and prostate. Isoform 1 is expressed preferentially in brain. Isoform 2 is expressed in prostate. Present in seminal plasma at concentrations ranging from 2 to 37 microg/mL (at protein level).

The protein resides in the secreted. It localises to the golgi apparatus. In terms of biological role, possible multifunctional protease. Efficiently cleaves 'bz-Phe-Arg-4-methylcoumaryl-7-amide', a kallikrein substrate, and weakly cleaves other substrates for kallikrein and trypsin. Cleaves synthetic peptides after arginine but not lysine residues. In Homo sapiens (Human), this protein is Kallikrein-11 (KLK11).